The following is a 297-amino-acid chain: MDSQRGIVEQAKSQSLNRQSSLYSLTLDEVQNHLGSSGKALGSMNLDELLKSVCSVEANQPSSMAVNGGAAAQEGLSRQGSLTLPRDLSKKTVDEVWKDIQQNKNGGSAHERRDKQPTLGEMTLEDLLLKAGVVTETIPGSNHDGPVGGGSAGSGAGLGQNITQVGPWIQYHQLPSMPQPQAFMPYPVSDMQAMVSQSSLMGGLSDTQTPGRKRVASGEVVEKTVERRQKRMIKNRESAARSRARKQAYTHELEIKVSRLEEENERLRKQKEVEKILPSVPPPDPKRQLRRTSSAPF.

Phosphoserine occurs at positions 21, 43, and 81. Disordered regions lie at residues 100–119 (IQQN…QPTL) and 138–157 (IPGS…SGAG). Thr118 is subject to Phosphothreonine. Gly residues predominate over residues 146–157 (PVGGGSAGSGAG). The 64-residue stretch at 225–288 (VERRQKRMIK…SVPPPDPKRQ (64 aa)) folds into the bZIP domain. The interval 227–246 (RRQKRMIKNRESAARSRARK) is basic motif. The tract at residues 253–267 (LEIKVSRLEEENERL) is leucine-zipper. Residues 272–297 (EVEKILPSVPPPDPKRQLRRTSSAPF) form a disordered region.

Belongs to the bZIP family. ABI5 subfamily. As to quaternary structure, DNA-binding heterodimer with ABI5/DPBF1, DPBF2 or EEL/DPBF4. Interacts with the AFP proteins AFP1, AFP2, AFP3 and AFP4. Predominantly expressed in seeds.

The protein localises to the nucleus. Binds to the embryo specification element and the ABA-responsive element (ABRE) of the Dc3 gene promoter. Could participate in abscisic acid-regulated gene expression during seed development. The polypeptide is ABSCISIC ACID-INSENSITIVE 5-like protein 2 (DPBF3) (Arabidopsis thaliana (Mouse-ear cress)).